The following is a 455-amino-acid chain: Golgi pH regulator (455 aa).

The next 5 membrane-spanning stretches (helical) occupy residues 5–25, 46–66, 79–99, 114–134, and 150–170; these read IDSSIMVTSQILFFGFGWLFF, VTFAFSCTMFELIIFEILGVL, LCVILLILVFMVPFYIGYFIV, CLLWLTFMYFFWKLGDPFPIL, and VGVIGVTLMALLSGFGAVNCP. N-linked (GlcNAc...) asparagine glycosylation is found at Asn-180 and Asn-243. 4 helical membrane-spanning segments follow: residues 290-310, 343-363, 378-398, and 425-445; these read GYFFSIYCVWKIFMATINIVL, ISFILVGIIIVSSIRGLLITL, VIVLLLAQIMGMYFVSSVLLI, and WFDVIFLVSALSSILFLYLAH.

Belongs to the Golgi pH regulator (TC 1.A.38) family. In terms of assembly, homotrimer. Interacts with RABL3; the interaction stabilizes GPR89B.

It localises to the golgi apparatus membrane. The catalysed reaction is iodide(out) = iodide(in). It carries out the reaction chloride(in) = chloride(out). It catalyses the reaction bromide(in) = bromide(out). The enzyme catalyses fluoride(in) = fluoride(out). Functionally, voltage-gated channel that enables the transfer of anions such as iodide, chloride, bromide and fluoride which may function in counter-ion conductance and participates in Golgi acidification. Plays a role in lymphocyte development, probably by acting as a RABL3 effector in hematopoietic cells. This Cricetulus griseus (Chinese hamster) protein is Golgi pH regulator.